The sequence spans 334 residues: CRISPR-associated endonuclease Cas1 (334 aa).

Glutamate 161, histidine 226, and glutamate 241 together coordinate Mn(2+).

Belongs to the CRISPR-associated endonuclease Cas1 family. As to quaternary structure, homodimer, forms a heterotetramer with a Cas2 homodimer. Requires Mg(2+) as cofactor. Mn(2+) is required as a cofactor.

In terms of biological role, CRISPR (clustered regularly interspaced short palindromic repeat), is an adaptive immune system that provides protection against mobile genetic elements (viruses, transposable elements and conjugative plasmids). CRISPR clusters contain spacers, sequences complementary to antecedent mobile elements, and target invading nucleic acids. CRISPR clusters are transcribed and processed into CRISPR RNA (crRNA). Acts as a dsDNA endonuclease. Involved in the integration of spacer DNA into the CRISPR cassette. This chain is CRISPR-associated endonuclease Cas1, found in Methanothermobacter thermautotrophicus (strain ATCC 29096 / DSM 1053 / JCM 10044 / NBRC 100330 / Delta H) (Methanobacterium thermoautotrophicum).